Here is a 345-residue protein sequence, read N- to C-terminus: DNA-directed RNA polymerase subunit alpha (345 aa).

Positions 1–234 (MRKNEMSTSK…DLLTTFLYVR (234 aa)) are alpha N-terminal domain (alpha-NTD). An alpha C-terminal domain (alpha-CTD) region spans residues 266–345 (LEERVLENRF…DKKIVLNRRK (80 aa)).

The protein belongs to the RNA polymerase alpha chain family. In plastids the minimal PEP RNA polymerase catalytic core is composed of four subunits: alpha, beta, beta', and beta''. When a (nuclear-encoded) sigma factor is associated with the core the holoenzyme is formed, which can initiate transcription.

Its subcellular location is the plastid. It localises to the chloroplast. The catalysed reaction is RNA(n) + a ribonucleoside 5'-triphosphate = RNA(n+1) + diphosphate. In terms of biological role, DNA-dependent RNA polymerase catalyzes the transcription of DNA into RNA using the four ribonucleoside triphosphates as substrates. The polypeptide is DNA-directed RNA polymerase subunit alpha (Adiantum capillus-veneris (Maidenhair fern)).